The primary structure comprises 151 residues: UPF0208 membrane protein ESA_00924 (151 aa).

2 helical membrane-spanning segments follow: residues 46–65 (FAIR…QIAL) and 69–91 (LGPA…WWLG).

This sequence belongs to the UPF0208 family.

It is found in the cell inner membrane. This Cronobacter sakazakii (strain ATCC BAA-894) (Enterobacter sakazakii) protein is UPF0208 membrane protein ESA_00924.